We begin with the raw amino-acid sequence, 209 residues long: Flavin prenyltransferase UbiX (209 aa).

FMN contacts are provided by residues 13–15, Ser39, 104–107, Cys116, and Arg139; these read GAS and STGT. Dimethylallyl phosphate contacts are provided by Tyr169 and Arg185.

Belongs to the UbiX/PAD1 family.

The enzyme catalyses dimethylallyl phosphate + FMNH2 = prenylated FMNH2 + phosphate. Flavin prenyltransferase that catalyzes the synthesis of the prenylated FMN cofactor (prenyl-FMN) for 4-hydroxy-3-polyprenylbenzoic acid decarboxylase UbiD. The prenyltransferase is metal-independent and links a dimethylallyl moiety from dimethylallyl monophosphate (DMAP) to the flavin N5 and C6 atoms of FMN. This Pseudomonas aeruginosa (strain ATCC 15692 / DSM 22644 / CIP 104116 / JCM 14847 / LMG 12228 / 1C / PRS 101 / PAO1) protein is Flavin prenyltransferase UbiX.